Consider the following 144-residue polypeptide: 3-dehydroquinate dehydratase (144 aa).

Y24 (proton acceptor) is an active-site residue. The substrate site is built by N73, H79, and D86. H99 functions as the Proton donor in the catalytic mechanism. Substrate is bound by residues 100 to 101 (LS) and R110.

The protein belongs to the type-II 3-dehydroquinase family. Homododecamer.

It carries out the reaction 3-dehydroquinate = 3-dehydroshikimate + H2O. Its pathway is metabolic intermediate biosynthesis; chorismate biosynthesis; chorismate from D-erythrose 4-phosphate and phosphoenolpyruvate: step 3/7. In terms of biological role, catalyzes a trans-dehydration via an enolate intermediate. The sequence is that of 3-dehydroquinate dehydratase from Shewanella putrefaciens (strain CN-32 / ATCC BAA-453).